The chain runs to 513 residues: Na(+)/H(+) antiporter NhaB (513 aa).

A run of 12 helical transmembrane segments spans residues 23–43 (LALIIFLIVNPLIFLISPFVA), 52–72 (IFTLAMALKCYPLLPGGLLAI), 97–117 (LLLMFMVAGIYFMKQLLLFIF), 120–140 (LLLSIRSKMLLSLSFCVAAAF), 144–164 (FLDALTVVAVVISVAVGFYGI), 202–222 (LMMHAGVGTALGGVMTMVGEP), 238–258 (FFLRMSPVTVPVLICGLLTCL), 303–323 (AIIGVWLVTALALHLAEVGLI), 348–368 (TESLPFTALLTVFFSVVAVII), 391–411 (LFYIFNGLLSSISDNVFVGTI), 447–467 (ATPNGQAAFLFLLTSALAPLI), and 475–495 (VWMALPYTLVLTLVGLLCVEF).

The protein belongs to the NhaB Na(+)/H(+) (TC 2.A.34) antiporter family.

The protein localises to the cell inner membrane. The enzyme catalyses 2 Na(+)(in) + 3 H(+)(out) = 2 Na(+)(out) + 3 H(+)(in). In terms of biological role, na(+)/H(+) antiporter that extrudes sodium in exchange for external protons. The sequence is that of Na(+)/H(+) antiporter NhaB from Shigella sonnei (strain Ss046).